The sequence spans 96 residues: Small ribosomal subunit protein bS6 (96 aa).

Belongs to the bacterial ribosomal protein bS6 family.

In terms of biological role, binds together with bS18 to 16S ribosomal RNA. The chain is Small ribosomal subunit protein bS6 from Acidothermus cellulolyticus (strain ATCC 43068 / DSM 8971 / 11B).